Here is a 555-residue protein sequence, read N- to C-terminus: Glutamine--tRNA ligase (555 aa).

The 'HIGH' region motif lies at 34-44 (PEPNGYLHIGH). ATP is bound by residues 35–37 (EPN) and 41–47 (HIGHAKS). Asp-67 and Tyr-212 together coordinate L-glutamine. Residues Thr-231, 261–262 (RL), and 269–271 (MSK) each bind ATP. A 'KMSKS' region motif is present at residues 268 to 272 (IMSKR).

This sequence belongs to the class-I aminoacyl-tRNA synthetase family. Monomer.

The protein resides in the cytoplasm. The catalysed reaction is tRNA(Gln) + L-glutamine + ATP = L-glutaminyl-tRNA(Gln) + AMP + diphosphate. This Yersinia pseudotuberculosis serotype O:1b (strain IP 31758) protein is Glutamine--tRNA ligase.